Consider the following 594-residue polypeptide: Putative 3,4-dihydroxy-2-butanone kinase (594 aa).

The DhaK domain occupies 11 to 341; that stretch reads DPNDVVTEFI…LDAPTKAPNW (331 aa). Substrate contacts are provided by residues 62 to 65, Lys113, and Asp118; that span reads GSGH. The active-site Tele-hemiaminal-histidine intermediate is His226. Residues 339–358 form a disordered region; it reads PNWPVGAEGNRPPAKIPVPL. The DhaL domain occupies 381–585; that stretch reads HILETAIEAA…AAAWYRAAAL (205 aa). ATP contacts are provided by residues 410 to 413, 455 to 456, Gly499, 507 to 508, and 570 to 572; these read DGDC, TS, TL, and DPG.

This sequence belongs to the dihydroxyacetone kinase (DAK) family.

This chain is Putative 3,4-dihydroxy-2-butanone kinase (DHBK), found in Solanum lycopersicum (Tomato).